A 356-amino-acid chain; its full sequence is 5-formaminoimidazole-4-carboxamide-1-(beta)-D-ribofuranosyl 5'-monophosphate synthetase (356 aa).

Residues histidine 27 and serine 94 each coordinate 5-amino-1-(5-phospho-beta-D-ribosyl)imidazole-4-carboxamide. Residues 101 to 333 (TENFAELTVP…YADLIQEDLS (233 aa)) enclose the ATP-grasp domain. ATP contacts are provided by residues 145–196 (PRDI…TRYY) and glutamate 226. Asparagine 255 lines the 5-amino-1-(5-phospho-beta-D-ribosyl)imidazole-4-carboxamide pocket. Glutamate 293 and glutamate 306 together coordinate Mg(2+).

Belongs to the phosphohexose mutase family. It depends on Mg(2+) as a cofactor. The cofactor is Mn(2+).

The enzyme catalyses 5-amino-1-(5-phospho-beta-D-ribosyl)imidazole-4-carboxamide + formate + ATP = 5-formamido-1-(5-phospho-D-ribosyl)imidazole-4-carboxamide + ADP + phosphate. It functions in the pathway purine metabolism; IMP biosynthesis via de novo pathway; 5-formamido-1-(5-phospho-D-ribosyl)imidazole-4-carboxamide from 5-amino-1-(5-phospho-D-ribosyl)imidazole-4-carboxamide (formate route): step 1/1. In terms of biological role, catalyzes the ATP- and formate-dependent formylation of 5-aminoimidazole-4-carboxamide-1-beta-d-ribofuranosyl 5'-monophosphate (AICAR) to 5-formaminoimidazole-4-carboxamide-1-beta-d-ribofuranosyl 5'-monophosphate (FAICAR) in the absence of folates. The protein is 5-formaminoimidazole-4-carboxamide-1-(beta)-D-ribofuranosyl 5'-monophosphate synthetase of Methanosarcina acetivorans (strain ATCC 35395 / DSM 2834 / JCM 12185 / C2A).